The following is a 659-amino-acid chain: Tyrosine-protein kinase BTK (659 aa).

Ala-2 carries the post-translational modification N-acetylalanine. One can recognise a PH domain in the interval 3–133 (AVILESIFLK…WIHQLKNVIR (131 aa)). The segment at 12 to 24 (KRSQQKKKTSPLN) is inositol-(1,3,4,5)-tetrakisphosphate 1-binding. Phosphoserine is present on Ser-21. Lys-26, Arg-28, and Tyr-39 together coordinate 1D-myo-inositol 1,3,4,5-tetrakisphosphate. Tyr-40 is subject to Phosphotyrosine. Lys-53 provides a ligand contact to 1D-myo-inositol 1,3,4,5-tetrakisphosphate. Phosphoserine occurs at positions 55 and 115. The segment at 135 to 171 (NSDLVQKYHPCFWIDGQYLCCSQTAKNAMGCQILENR) adopts a Btk-type zinc-finger fold. Zn(2+) is bound by residues His-143, Cys-154, Cys-155, and Cys-165. A disordered region spans residues 171–210 (RNGSLKPGSSHRKTKKPLPPTPEEDQILKKPLPPEPAAAP). A Phosphoserine; by PKC/PRKCB modification is found at Ser-180. Position 191 is a phosphothreonine (Thr-191). Residues 214–274 (SELKKVVALY…PSNYVTEAED (61 aa)) form the SH3 domain. Residue Tyr-223 is modified to Phosphotyrosine; by autocatalysis. The SH2 domain occupies 281–377 (WYSKHMTRSQ…GLISRLKYPV (97 aa)). Phosphotyrosine is present on residues Tyr-344 and Tyr-361. Positions 402-655 (LTFLKELGTG…ILLSNILDVM (254 aa)) constitute a Protein kinase domain. ATP is bound by residues 408–416 (LGTGQFGVV) and Lys-430. 474 to 477 (TEYM) lines the clofedanol pocket. 474 to 477 (TEYM) lines the dasatinib pocket. The Proton acceptor role is filled by Asp-521. Position 542 (Leu-542) interacts with clofedanol. The residue at position 551 (Tyr-551) is a Phosphotyrosine; by LYN and SYK. Residues 581-588 (WAFGVLMW) carry the CAV1-binding motif. Ser-604 carries the phosphoserine modification. Phosphotyrosine is present on Tyr-617. 2 positions are modified to phosphoserine: Ser-623 and Ser-659.

Belongs to the protein kinase superfamily. Tyr protein kinase family. TEC subfamily. In terms of assembly, part of a complex composed of EEIG1, TNFRSF11A/RANK, PLCG2, GAB2, TEC and BTK; complex formation increases in the presence of TNFSF11/RANKL. Binds GTF2I through the PH domain. Interacts with SH3BP5 via the SH3 domain. Interacts with IBTK via its PH domain. Interacts with ARID3A, CAV1, FASLG, PIN1, TLR8 and TLR9. Interacts with MPL/TPOR. The cofactor is Zn(2+). In terms of processing, following B-cell receptor (BCR) engagement, translocates to the plasma membrane where it gets phosphorylated at Tyr-551 by LYN and SYK. Phosphorylation at Tyr-551 is followed by autophosphorylation of Tyr-223 which may create a docking site for a SH2 containing protein. Phosphorylation at Ser-180 by PRKCB, leads in translocation of BTK back to the cytoplasmic fraction. Phosphorylation at Ser-21 and Ser-115 creates a binding site for PIN1 at these Ser-Pro motifs, and promotes it's recruitment. In terms of tissue distribution, predominantly expressed in B-lymphocytes.

The protein resides in the cytoplasm. It is found in the cell membrane. Its subcellular location is the nucleus. The protein localises to the membrane raft. The enzyme catalyses L-tyrosyl-[protein] + ATP = O-phospho-L-tyrosyl-[protein] + ADP + H(+). Activated by phosphorylation. In primary B lymphocytes, is almost always non-phosphorylated and is thus catalytically inactive. Stimulation of TLR8 and TLR9 causes BTK activation. As a negative feedback mechanism to fine-tune BCR signaling, activated PRKCB down-modulates BTK function via direct phosphorylation of BTK at Ser-180, resulting in translocation of BTK back to the cytoplasmic fraction. PIN1, SH3BP5, and IBTK were also identified as BTK activity inhibitors. Interaction with CAV1 leads to dramatic down-regulation of the kinase activity of BTK. LFM-13A is a specific inhibitor of BTK. Dasatinib, a cancer drug acting as a tyrosine kinase inhibitor, also blocks BTK activity. Functionally, non-receptor tyrosine kinase indispensable for B lymphocyte development, differentiation and signaling. Binding of antigen to the B-cell antigen receptor (BCR) triggers signaling that ultimately leads to B-cell activation. After BCR engagement and activation at the plasma membrane, phosphorylates PLCG2 at several sites, igniting the downstream signaling pathway through calcium mobilization, followed by activation of the protein kinase C (PKC) family members. PLCG2 phosphorylation is performed in close cooperation with the adapter protein B-cell linker protein BLNK. BTK acts as a platform to bring together a diverse array of signaling proteins and is implicated in cytokine receptor signaling pathways. Plays an important role in the function of immune cells of innate as well as adaptive immunity, as a component of the Toll-like receptors (TLR) pathway. The TLR pathway acts as a primary surveillance system for the detection of pathogens and are crucial to the activation of host defense. Especially, is a critical molecule in regulating TLR9 activation in splenic B-cells. Within the TLR pathway, induces tyrosine phosphorylation of TIRAP which leads to TIRAP degradation. BTK also plays a critical role in transcription regulation. Induces the activity of NF-kappa-B, which is involved in regulating the expression of hundreds of genes. BTK is involved on the signaling pathway linking TLR8 and TLR9 to NF-kappa-B. Acts as an activator of NLRP3 inflammasome assembly by mediating phosphorylation of NLRP3. Transiently phosphorylates transcription factor GTF2I on tyrosine residues in response to BCR. GTF2I then translocates to the nucleus to bind regulatory enhancer elements to modulate gene expression. ARID3A and NFAT are other transcriptional target of BTK. BTK is required for the formation of functional ARID3A DNA-binding complexes. There is however no evidence that BTK itself binds directly to DNA. BTK has a dual role in the regulation of apoptosis. Plays a role in STING1-mediated induction of type I interferon (IFN) response by phosphorylating DDX41. This chain is Tyrosine-protein kinase BTK (BTK), found in Homo sapiens (Human).